A 223-amino-acid polypeptide reads, in one-letter code: Small ribosomal subunit protein uS3 (223 aa).

In terms of domain architecture, KH type-2 spans 38–106 (IRKFLDEKLK…QVHINIVEIK (69 aa)).

This sequence belongs to the universal ribosomal protein uS3 family. Part of the 30S ribosomal subunit. Forms a tight complex with proteins S10 and S14.

Its function is as follows. Binds the lower part of the 30S subunit head. Binds mRNA in the 70S ribosome, positioning it for translation. The protein is Small ribosomal subunit protein uS3 of Lactobacillus delbrueckii subsp. bulgaricus (strain ATCC 11842 / DSM 20081 / BCRC 10696 / JCM 1002 / NBRC 13953 / NCIMB 11778 / NCTC 12712 / WDCM 00102 / Lb 14).